The following is a 337-amino-acid chain: Putative NAC domain-containing protein 94 (337 aa).

One can recognise an NAC domain in the interval 20-191 (VLPGFRFHPT…AWAICRIFKK (172 aa)).

The protein resides in the nucleus. The protein is Putative NAC domain-containing protein 94 (ANAC094) of Arabidopsis thaliana (Mouse-ear cress).